The chain runs to 195 residues: Heavy metal-associated isoprenylated plant protein 18 (195 aa).

Disordered stretches follow at residues 36–76 (DVVQ…KPET) and 145–172 (EKEKKDDEPITKDEENEIDRGVYMNPSS). Basic and acidic residues-rich tracts occupy residues 47–76 (TVTKKNEEGDIVDKKDETPEVEEKIDKPET) and 145–157 (EKEKKDDEPITKD). One can recognise an HMA domain in the interval 78-149 (TRKLEIHIAF…RIVKMEKEKK (72 aa)). Residue Cys192 is modified to Cysteine methyl ester. A lipid anchor (S-farnesyl cysteine) is attached at Cys192. A propeptide spans 193–195 (SIS) (removed in mature form).

Belongs to the HIPP family.

Probable heavy-metal-binding protein. Required for female gametophyte development and function. This chain is Heavy metal-associated isoprenylated plant protein 18, found in Arabidopsis thaliana (Mouse-ear cress).